A 201-amino-acid polypeptide reads, in one-letter code: Recombination protein RecR (201 aa).

Residues 57-72 (CADCRTFTEQEVCNIC) form a C4-type zinc finger. The region spanning 81 to 176 (GQICVVESPA…EASRIAHGVP (96 aa)) is the Toprim domain.

Belongs to the RecR family.

Functionally, may play a role in DNA repair. It seems to be involved in an RecBC-independent recombinational process of DNA repair. It may act with RecF and RecO. The chain is Recombination protein RecR from Escherichia coli O17:K52:H18 (strain UMN026 / ExPEC).